The sequence spans 211 residues: PDR1 up-regulated protein 1 (211 aa).

A run of 2 helical transmembrane segments spans residues 45–67 (ISKASVVGAATGLSAGLGGPYAY) and 82–99 (RTILLGVVSMVIMRNVAA).

This sequence belongs to the PUP1 family.

The protein localises to the mitochondrion membrane. In terms of biological role, mitochondrial protein that contributes to the enhanced virulence of C.glabrata strains that acquired azole resistance. The protein is PDR1 up-regulated protein 1 of Candida glabrata (strain ATCC 2001 / BCRC 20586 / JCM 3761 / NBRC 0622 / NRRL Y-65 / CBS 138) (Yeast).